The sequence spans 361 residues: Biotin synthase (361 aa).

Residues 63–290 enclose the Radical SAM core domain; that stretch reads NTVQLSTLLS…RAMVRLSAGR (228 aa). Positions 78, 82, and 85 each coordinate [4Fe-4S] cluster. Residues cysteine 122, cysteine 153, cysteine 213, and arginine 285 each coordinate [2Fe-2S] cluster.

It belongs to the radical SAM superfamily. Biotin synthase family. In terms of assembly, homodimer. [4Fe-4S] cluster is required as a cofactor. [2Fe-2S] cluster serves as cofactor.

It carries out the reaction (4R,5S)-dethiobiotin + (sulfur carrier)-SH + 2 reduced [2Fe-2S]-[ferredoxin] + 2 S-adenosyl-L-methionine = (sulfur carrier)-H + biotin + 2 5'-deoxyadenosine + 2 L-methionine + 2 oxidized [2Fe-2S]-[ferredoxin]. The protein operates within cofactor biosynthesis; biotin biosynthesis; biotin from 7,8-diaminononanoate: step 2/2. Catalyzes the conversion of dethiobiotin (DTB) to biotin by the insertion of a sulfur atom into dethiobiotin via a radical-based mechanism. This Paraburkholderia phytofirmans (strain DSM 17436 / LMG 22146 / PsJN) (Burkholderia phytofirmans) protein is Biotin synthase.